A 359-amino-acid chain; its full sequence is Archaemetzincin-2 (359 aa).

A Zn(2+)-binding site is contributed by His254. The active-site Proton acceptor is the Glu255. Zn(2+) is bound by residues His258, His264, Cys265, Cys270, Cys289, and Cys292.

It belongs to the peptidase M54 family. It depends on Zn(2+) as a cofactor.

Functionally, probable zinc metalloprotease. This is Archaemetzincin-2 (Amz2) from Rattus norvegicus (Rat).